A 466-amino-acid chain; its full sequence is 5-hydroxytryptamine receptor (466 aa).

The tract at residues 1-21 (MNASRLPGFNDTSQDQPYPTS) is disordered. The Extracellular portion of the chain corresponds to 1–66 (MNASRLPGFN…TSFVLMAVTS (66 aa)). Residues N2, N10, N29, N41, N45, and N50 are each glycosylated (N-linked (GlcNAc...) asparagine). Residues 10 to 21 (NDTSQDQPYPTS) show a composition bias toward polar residues. Residues 67-89 (VVLALIILATIVGNVFVIAAIII) traverse the membrane as a helical segment. Residues 90–99 (ERNLQNVANY) are Cytoplasmic-facing. The helical transmembrane segment at 100 to 121 (LVASLAVADLMVACLVMPLGAV) threads the bilayer. The Extracellular portion of the chain corresponds to 122–136 (YEVSQGWILGPELCD). An intrachain disulfide couples C135 to C215. Residues 137–158 (MWTSSDVLCSSASILHLVAIAT) form a helical membrane-spanning segment. The Cytoplasmic segment spans residues 159–177 (DRYWAVTDVDYIHIRNEKR). Residues 178–200 (IFTMIVLVWGAALVVSLAPQLGW) form a helical membrane-spanning segment. Over 201 to 228 (KDPDYLARITQQQKCLVSQDLAYQIFAT) the chain is Extracellular. Residues 229–250 (MSTFYVPLAVILILYWKIFQTA) traverse the membrane as a helical segment. Residues 251 to 386 (RRRIRRRRDP…AKRERKAAKT (136 aa)) are Cytoplasmic-facing. 2 disordered regions span residues 255-282 (RRRR…QSAR) and 339-360 (VPPS…KPER). Over residues 339–353 (VPPSVSPEKSSSTVT) the composition is skewed to low complexity. The helical transmembrane segment at 387 to 410 (LAIITGAFVFCWLPFFIMALVMPI) threads the bilayer. Residues 411–419 (CQTCVISDY) lie on the Extracellular side of the membrane. The chain crosses the membrane as a helical span at residues 420-442 (LASFFLWLGYFNSTLNPVIYTIF). The Cytoplasmic segment spans residues 443–466 (SPDFRQAFARILFGTHRRRRYKKF).

Belongs to the G-protein coupled receptor 1 family.

It is found in the cell membrane. In terms of biological role, this is a receptor for 5-hydroxytryptamine (serotonin), a biogenic hormone that function as a neurotransmitter, a hormone, and a mitogen. This is 5-hydroxytryptamine receptor from Heliothis virescens (Tobacco budworm moth).